We begin with the raw amino-acid sequence, 213 residues long: Ras-related protein Rab-25 (213 aa).

The GTP site is built by S21, G24, K25, T26, N27, S38, H39, T43, and T44. T26 is a binding site for Mg(2+). 2 consecutive short sequence motifs (switch) follow at residues 35-49 (NEFS…GVEF) and 67-84 (DTAG…YYRG). Positions 44 and 67 each coordinate Mg(2+). G70, N125, K126, D128, A156, and L157 together coordinate GTP. 2 S-geranylgeranyl cysteine lipidation sites follow: C209 and C210. Position 210 is a cysteine methyl ester (C210). A propeptide spans 211–213 (ISL) (removed in mature form).

Belongs to the small GTPase superfamily. Rab family. Interacts (GTP-bound form) with RAB11FIP1, RAB11FIP2, RAB11FIP3 and RAB11FIP4. Interacts (via the hypervariable C-terminal region) with ITGB1 (via the cytoplasmic region); the interaction is GTP-dependent. Interacts with ITGAV. Associates with the integrin alpha-V/beta-1 heterodimer. Interacts with VPS33B. Mg(2+) is required as a cofactor. Expression is restricted to epithelial cells. Expressed in ovarian epithelium (NOE) and breast tissue. Expressed in ovarian cancer; expression is increased relative to NOE cells. Expression in ovarian cancer is stage dependent, with stage III and stage IV showing higher levels than early stage cancers. Expressed in breast cancer; expression is increased relative to normal breast tissue.

It localises to the cell membrane. The protein resides in the cytoplasmic vesicle. It is found in the cell projection. The protein localises to the pseudopodium membrane. It catalyses the reaction GTP + H2O = GDP + phosphate + H(+). Its activity is regulated as follows. Regulated by guanine nucleotide exchange factors (GEFs) which promote the exchange of bound GDP for free GTP. Regulated by GTPase activating proteins (GAPs) which increase the GTP hydrolysis activity. Inhibited by GDP dissociation inhibitors (GDIs) which prevent Rab-GDP dissociation. Its function is as follows. The small GTPases Rab are key regulators of intracellular membrane trafficking, from the formation of transport vesicles to their fusion with membranes. Rabs cycle between an inactive GDP-bound form and an active GTP-bound form that is able to recruit to membranes different set of downstream effectors directly responsible for vesicle formation, movement, tethering and fusion. RAB25 regulates epithelial cell differentiation, proliferation and survival, thereby playing key roles in tumorigenesis. Promotes invasive migration of cells in which it functions to localize and maintain integrin alpha-V/beta-1 at the tips of extending pseudopodia. Involved in the regulation of epithelial morphogenesis through the control of CLDN4 expression and localization at tight junctions. May selectively regulate the apical recycling pathway. Together with MYO5B regulates transcytosis. In Homo sapiens (Human), this protein is Ras-related protein Rab-25.